Reading from the N-terminus, the 250-residue chain is Phosphate import ATP-binding protein PstB (250 aa).

An ABC transporter domain is found at 4–245; sequence LTARDLKLSF…PRHELTEKYV (242 aa). 36 to 43 lines the ATP pocket; that stretch reads GPSGSGKS.

This sequence belongs to the ABC transporter superfamily. Phosphate importer (TC 3.A.1.7) family. In terms of assembly, the complex is composed of two ATP-binding proteins (PstB), two transmembrane proteins (PstC and PstA) and a solute-binding protein (PstS).

Its subcellular location is the cell membrane. The enzyme catalyses phosphate(out) + ATP + H2O = ADP + 2 phosphate(in) + H(+). Part of the ABC transporter complex PstSACB involved in phosphate import. Responsible for energy coupling to the transport system. In Pyrobaculum aerophilum (strain ATCC 51768 / DSM 7523 / JCM 9630 / CIP 104966 / NBRC 100827 / IM2), this protein is Phosphate import ATP-binding protein PstB.